The primary structure comprises 630 residues: Triacylglycerol lipase ptl2 (630 aa).

Residues 251 to 442 (LCLSGGASFA…RTDIPLSELR (192 aa)) enclose the PNPLA domain. The short motif at 282–286 (GTSGG) is the GXSXG element. S284 acts as the Nucleophile in catalysis. Catalysis depends on D429, which acts as the Proton acceptor.

Belongs to the PLPL family.

Its subcellular location is the lipid droplet. The enzyme catalyses a triacylglycerol + H2O = a diacylglycerol + a fatty acid + H(+). Functionally, lipid particle-localized triacylglycerol (TAG) lipase. The lipid droplet/particle is a lipid storage compartment which serves as a depot of energy and building blocks for membrane lipid biosynthesis. Involved in the mobilization of the non-polar storage lipids triacylglycerols (TAGs) from lipid particles by hydrolysis of TAGs, releasing and supplying specific fatty acids to the appropriate metabolic pathways. The polypeptide is Triacylglycerol lipase ptl2 (ptl2) (Schizosaccharomyces pombe (strain 972 / ATCC 24843) (Fission yeast)).